A 462-amino-acid polypeptide reads, in one-letter code: Ribosomal oxygenase 2 (462 aa).

A disordered region spans residues 1-24 (MPKKARPAGDGKEQGPAPKQVKVE). The JmjC domain maps to 139 to 271 (QPQRFKDELW…SSWGDFLLDT (133 aa)). Residues H179, D181, and H240 each coordinate Fe cation. S308 carries the phosphoserine modification.

This sequence belongs to the ROX family. MINA53 subfamily. The cofactor is Fe(2+).

The protein resides in the nucleus. The protein localises to the nucleolus. The catalysed reaction is L-histidyl-[ribosomal protein uL15] + 2-oxoglutarate + O2 = (3S)-3-hydroxy-L-histidyl-[ribosomal protein uL15] + succinate + CO2. The enzyme catalyses L-histidyl-[protein] + 2-oxoglutarate + O2 = (3S)-3-hydroxy-L-histidyl-[protein] + succinate + CO2. Functionally, oxygenase that can act as both a histone lysine demethylase and a ribosomal histidine hydroxylase. Is involved in the demethylation of trimethylated 'Lys-9' on histone H3 (H3K9me3), leading to an increase in ribosomal RNA expression. Also catalyzes the hydroxylation of 60S ribosomal protein L27a on 'His-39'. May play an important role in cell growth and survival. May be involved in ribosome biogenesis, most likely during the assembly process of pre-ribosomal particles. The chain is Ribosomal oxygenase 2 (RIOX2) from Bos taurus (Bovine).